Here is a 219-residue protein sequence, read N- to C-terminus: Small ribosomal subunit protein uS3 (219 aa).

Residues Ile38–Lys107 enclose the KH type-2 domain.

It belongs to the universal ribosomal protein uS3 family. In terms of assembly, part of the 30S ribosomal subunit. Forms a tight complex with proteins S10 and S14.

In terms of biological role, binds the lower part of the 30S subunit head. Binds mRNA in the 70S ribosome, positioning it for translation. This chain is Small ribosomal subunit protein uS3, found in Exiguobacterium sp. (strain ATCC BAA-1283 / AT1b).